The chain runs to 171 residues: 3-hydroxydecanoyl-[acyl-carrier-protein] dehydratase (171 aa).

Histidine 71 is a catalytic residue.

This sequence belongs to the thioester dehydratase family. FabA subfamily. Homodimer.

The protein resides in the cytoplasm. It carries out the reaction a (3R)-hydroxyacyl-[ACP] = a (2E)-enoyl-[ACP] + H2O. It catalyses the reaction (3R)-hydroxydecanoyl-[ACP] = (2E)-decenoyl-[ACP] + H2O. The enzyme catalyses (2E)-decenoyl-[ACP] = (3Z)-decenoyl-[ACP]. The protein operates within lipid metabolism; fatty acid biosynthesis. Its function is as follows. Necessary for the introduction of cis unsaturation into fatty acids. Catalyzes the dehydration of (3R)-3-hydroxydecanoyl-ACP to E-(2)-decenoyl-ACP and then its isomerization to Z-(3)-decenoyl-ACP. Can catalyze the dehydratase reaction for beta-hydroxyacyl-ACPs with saturated chain lengths up to 16:0, being most active on intermediate chain length. The sequence is that of 3-hydroxydecanoyl-[acyl-carrier-protein] dehydratase from Rhizobium meliloti (strain 1021) (Ensifer meliloti).